The sequence spans 353 residues: Photosystem II protein D1 (353 aa).

The residue at position 2 (T2) is an N-acetylthreonine. At T2 the chain carries Phosphothreonine. The next 3 helical transmembrane spans lie at 29–46 (YIGW…TATS), 118–133 (HFLL…EWEL), and 142–156 (WIAV…AATA). A chlorophyll a-binding site is contributed by H118. Y126 contributes to the pheophytin a binding site. [CaMn4O5] cluster contacts are provided by D170 and E189. The helical transmembrane segment at 197–218 (FHMLGVAGVFGGSLFSAMHGSL) threads the bilayer. H198 serves as a coordination point for chlorophyll a. A quinone is bound by residues H215 and 264–265 (SF). H215 provides a ligand contact to Fe cation. H272 serves as a coordination point for Fe cation. Residues 274 to 288 (FLTAWPVVGIWFTAL) form a helical membrane-spanning segment. Residues H332, E333, D342, and A344 each coordinate [CaMn4O5] cluster. A propeptide spanning residues 345–353 (AVEAPSTNG) is cleaved from the precursor.

This sequence belongs to the reaction center PufL/M/PsbA/D family. PSII is composed of 1 copy each of membrane proteins PsbA, PsbB, PsbC, PsbD, PsbE, PsbF, PsbH, PsbI, PsbJ, PsbK, PsbL, PsbM, PsbT, PsbX, PsbY, PsbZ, Psb30/Ycf12, at least 3 peripheral proteins of the oxygen-evolving complex and a large number of cofactors. It forms dimeric complexes. Requires The D1/D2 heterodimer binds P680, chlorophylls that are the primary electron donor of PSII, and subsequent electron acceptors. It shares a non-heme iron and each subunit binds pheophytin, quinone, additional chlorophylls, carotenoids and lipids. D1 provides most of the ligands for the Mn4-Ca-O5 cluster of the oxygen-evolving complex (OEC). There is also a Cl(-1) ion associated with D1 and D2, which is required for oxygen evolution. The PSII complex binds additional chlorophylls, carotenoids and specific lipids. as cofactor. Post-translationally, tyr-161 forms a radical intermediate that is referred to as redox-active TyrZ, YZ or Y-Z. C-terminally processed by CTPA; processing is essential to allow assembly of the oxygen-evolving complex and thus photosynthetic growth.

The protein resides in the plastid. Its subcellular location is the chloroplast thylakoid membrane. The catalysed reaction is 2 a plastoquinone + 4 hnu + 2 H2O = 2 a plastoquinol + O2. Its function is as follows. Photosystem II (PSII) is a light-driven water:plastoquinone oxidoreductase that uses light energy to abstract electrons from H(2)O, generating O(2) and a proton gradient subsequently used for ATP formation. It consists of a core antenna complex that captures photons, and an electron transfer chain that converts photonic excitation into a charge separation. The D1/D2 (PsbA/PsbD) reaction center heterodimer binds P680, the primary electron donor of PSII as well as several subsequent electron acceptors. In Barbarea verna (Land cress), this protein is Photosystem II protein D1.